A 558-amino-acid chain; its full sequence is Receptor-like kinase LIP2 (558 aa).

Residues 1 to 45 form a disordered region; it reads MHCFPCFSSPKNKKSSTTNETNDNNEPKPDDRRRAEETEEIEQSE. Over residues 15 to 24 the composition is skewed to low complexity; sequence SSTTNETNDN. Residues 25–36 are compositionally biased toward basic and acidic residues; sequence NEPKPDDRRRAE. Thr-53 carries the post-translational modification Phosphothreonine. Residues 64-343 enclose the Protein kinase domain; the sequence is FRQECLLGEG…SDVMVALSFL (280 aa). Residues 70 to 78 and Lys-93 contribute to the ATP site; that span reads LGEGGFGRV. Tyr-138 is subject to Phosphotyrosine. The active-site Proton acceptor is the Asp-191. Phosphoserine occurs at positions 195 and 227. Thr-233 is subject to Phosphothreonine. At Tyr-241 the chain carries Phosphotyrosine. The segment at 372-558 is disordered; the sequence is HDSNLVSPPP…SDVAIDSIKE (187 aa). Residues 401 to 418 show a composition bias toward basic and acidic residues; the sequence is ESEKESVSKNEYKKKHEE. The segment covering 419–431 has biased composition (acidic residues); sequence EDSSMESDDESDS. The segment covering 432–448 has biased composition (basic and acidic residues); it reads NSEHEKDQPPKPIDEKN. Residues 473-486 are compositionally biased toward low complexity; it reads SKSSQKSNDESTSS. 3 stretches are compositionally biased toward basic and acidic residues: residues 488–500, 508–524, and 547–558; these read YDSD…KGKE, EEKH…KTDD, and IKSDVAIDSIKE.

Belongs to the protein kinase superfamily. Ser/Thr protein kinase family. As to quaternary structure, interacts with PRK6. Palmitoylated. In terms of tissue distribution, expressed in mature pollen and in germinating pollen tubes.

It is found in the cell membrane. Functionally, involved in pollen tube guidance into micropyle. Participates in perception of the ovule-secreted peptide signal LURE1. The sequence is that of Receptor-like kinase LIP2 from Arabidopsis thaliana (Mouse-ear cress).